The chain runs to 362 residues: Glutamate 5-kinase (362 aa).

Position 3 (Lys3) interacts with ATP. Ser43, Asp128, and Asn140 together coordinate substrate. ATP contacts are provided by residues 160–161 (TD) and 202–208 (TGGMRTK). The 82-residue stretch at 267–348 (AGAILIDDGA…REIENVLGYS (82 aa)) folds into the PUA domain.

This sequence belongs to the glutamate 5-kinase family.

The protein resides in the cytoplasm. It catalyses the reaction L-glutamate + ATP = L-glutamyl 5-phosphate + ADP. The protein operates within amino-acid biosynthesis; L-proline biosynthesis; L-glutamate 5-semialdehyde from L-glutamate: step 1/2. Catalyzes the transfer of a phosphate group to glutamate to form L-glutamate 5-phosphate. The protein is Glutamate 5-kinase of Xanthomonas euvesicatoria pv. vesicatoria (strain 85-10) (Xanthomonas campestris pv. vesicatoria).